Reading from the N-terminus, the 194-residue chain is uncharacterized protein (194 aa).

One can recognise an SIS domain in the interval 34–192 (VMQCLLGGNK…CELVDQTLFP (159 aa)).

The protein belongs to the SIS family. DiaA subfamily.

This is an uncharacterized protein from Haemophilus influenzae (strain ATCC 51907 / DSM 11121 / KW20 / Rd).